Reading from the N-terminus, the 418-residue chain is Serine hydroxymethyltransferase (418 aa).

(6S)-5,6,7,8-tetrahydrofolate is bound by residues leucine 118 and glycine 122–leucine 124. Position 227 is an N6-(pyridoxal phosphate)lysine (lysine 227). A (6S)-5,6,7,8-tetrahydrofolate-binding site is contributed by glutamate 242.

It belongs to the SHMT family. In terms of assembly, homodimer. Pyridoxal 5'-phosphate serves as cofactor.

It is found in the cytoplasm. It catalyses the reaction (6R)-5,10-methylene-5,6,7,8-tetrahydrofolate + glycine + H2O = (6S)-5,6,7,8-tetrahydrofolate + L-serine. It functions in the pathway one-carbon metabolism; tetrahydrofolate interconversion. The protein operates within amino-acid biosynthesis; glycine biosynthesis; glycine from L-serine: step 1/1. Functionally, catalyzes the reversible interconversion of serine and glycine with tetrahydrofolate (THF) serving as the one-carbon carrier. This reaction serves as the major source of one-carbon groups required for the biosynthesis of purines, thymidylate, methionine, and other important biomolecules. Also exhibits THF-independent aldolase activity toward beta-hydroxyamino acids, producing glycine and aldehydes, via a retro-aldol mechanism. This is Serine hydroxymethyltransferase from Chloroflexus aggregans (strain MD-66 / DSM 9485).